A 334-amino-acid chain; its full sequence is MIKTFIKERGSWILIIIFLQCFTVFIAYLDSAIPLAPVFYSVFLSSMIFLFFLAVRYKKETTFYRKLEEWDKDLDVTNLAAAESPFERIIEQTIVKQTGYLQEKAHRHETALEQEKDDLLAWIHEIKTPLTAMHLIIDRLEDRTIKGQLTYEWMRIHLLLDQQLHQKRIPFMENDLYVEKVNLESVLHQEIKTLQSWCIQKGIGFDLQLEVTDVLTDAKWLSFILRQLLSNAVKYSEASDIIIKSDVVSGKTVVEVTDFGRGIEPKDLPRIFEKGFTSTKTDQTNGATGMGLYLAKRVAEPLLIDLAVSSTVGEGTTFTLTFPKENEFVRTLGM.

2 helical membrane passes run 13–33 (ILII…DSAI) and 35–55 (LAPV…FLAV). The Histidine kinase domain occupies 121 to 326 (AWIHEIKTPL…TFTLTFPKEN (206 aa)). His-124 carries the phosphohistidine; by autocatalysis modification.

Its subcellular location is the cell membrane. The catalysed reaction is ATP + protein L-histidine = ADP + protein N-phospho-L-histidine.. Member of the two-component regulatory system BceS/BceR involved in the regulation of bacitracin resistance. Activates BceR in response to extracellular bacitracin. This is Sensor protein BceS (bceS) from Halalkalibacterium halodurans (strain ATCC BAA-125 / DSM 18197 / FERM 7344 / JCM 9153 / C-125) (Bacillus halodurans).